The chain runs to 439 residues: Methylenetetrahydrofolate--tRNA-(uracil-5-)-methyltransferase TrmFO (439 aa).

Position 7–12 (7–12 (GAGLAG)) interacts with FAD.

The protein belongs to the MnmG family. TrmFO subfamily. FAD is required as a cofactor.

Its subcellular location is the cytoplasm. It catalyses the reaction uridine(54) in tRNA + (6R)-5,10-methylene-5,6,7,8-tetrahydrofolate + NADH + H(+) = 5-methyluridine(54) in tRNA + (6S)-5,6,7,8-tetrahydrofolate + NAD(+). It carries out the reaction uridine(54) in tRNA + (6R)-5,10-methylene-5,6,7,8-tetrahydrofolate + NADPH + H(+) = 5-methyluridine(54) in tRNA + (6S)-5,6,7,8-tetrahydrofolate + NADP(+). In terms of biological role, catalyzes the folate-dependent formation of 5-methyl-uridine at position 54 (M-5-U54) in all tRNAs. The protein is Methylenetetrahydrofolate--tRNA-(uracil-5-)-methyltransferase TrmFO of Heliobacterium modesticaldum (strain ATCC 51547 / Ice1).